Here is a 623-residue protein sequence, read N- to C-terminus: DELLA protein RHT-1 (623 aa).

Residues 1–27 (MKREYQDAGGSGGGGGGMGSSEDKMMV) are disordered. Over residues 9-19 (GGSGGGGGGMG) the composition is skewed to gly residues. Residues 38–42 (DELLA) carry the DELLA motif motif. Disordered regions lie at residues 109-138 (LNAP…GYFD) and 159-201 (AGAT…GARS). The span at 111–120 (APPPPLPPAP) shows a compositional bias: pro residues. 2 stretches are compositionally biased toward low complexity: residues 121 to 131 (QLNASTSSTVT) and 181 to 201 (GGSS…GARS). A GRAS domain is found at 225 to 619 (VDTQEAGIRL…RPLIATSAWR (395 aa)). Residues 232 to 288 (IRLVHALLACAEAVQQENLSAAEALVKQIPLLAASQGGAMRKVAAYFGEALARRVFR) are leucine repeat I (LRI). The LxCxE motif motif lies at 239–243 (LACAE). Positions 307-372 (HAHFYESCPY…GGPPSFRLTG (66 aa)) are VHIID. The VHIID motif lies at 338–342 (VHVVD). Positions 386–425 (QVGWKLAQFAHTIRVDFQYRGLVAATLADLEPFMLQPEGE) are leucine repeat II (LRII). Positions 435 to 540 (IAVNSVFEMH…EVYLGRQICN (106 aa)) are PFYRE. The interval 543 to 619 (ACEGAERTER…RPLIATSAWR (77 aa)) is SAW.

This sequence belongs to the GRAS family. DELLA subfamily. Post-translationally, phosphorylated. In terms of processing, ubiquitinated. Upon GA application it is ubiquitinated, leading to its subsequent degradation.

The protein resides in the nucleus. Its function is as follows. Probable transcriptional regulator that acts as a repressor of the gibberellin (GA) signaling pathway. Probably acts by participating in large multiprotein complexes that repress transcription of GA-inducible genes. Upon GA application, it is degraded by the proteasome, allowing the GA signaling pathway. The protein is DELLA protein RHT-1 (RHT1) of Triticum aestivum (Wheat).